Reading from the N-terminus, the 343-residue chain is Probable transcription factor MYB58 (343 aa).

A disordered region spans residues 1 to 30 (MARAPGGVRRRSGRRGAGGGGAGGGGEALR). Residues 15–27 (RGAGGGGAGGGGE) show a composition bias toward gly residues. HTH myb-type domains lie at 26–78 (GEAL…VNKL) and 79–134 (RPNL…KRLA). DNA-binding regions (H-T-H motif) lie at residues 54–77 (WSSI…WVNK) and 107–130 (WARI…STRQ). Disordered regions lie at residues 137–169 (LRGP…TATF), 219–238 (PPAD…PPPL), and 307–343 (DDLP…DDVL). Residues 157–169 (PSSSSLDSQTATF) are compositionally biased toward polar residues. Over residues 320–336 (QPPPPPPPPPPPSPSPS) the composition is skewed to pro residues.

The protein resides in the nucleus. Probable transcription factor. The sequence is that of Probable transcription factor MYB58 from Oryza sativa subsp. japonica (Rice).